Here is a 95-residue protein sequence, read N- to C-terminus: Bombyxin F-1 (95 aa).

The signal sequence occupies residues 1 to 19 (MKLVVIVLLVISVSILVSA). Intrachain disulfides connect Cys29–Cys82, Cys41–Cys95, and Cys81–Cys86. Residues 53 to 71 (NSDMVYEDSGMPELLPADT) constitute a propeptide, c peptide like.

This sequence belongs to the insulin family. As to quaternary structure, heterodimer of a B chain and an A chain linked by two disulfide bonds.

The protein resides in the secreted. The sequence is that of Bombyxin F-1 (BBXF1) from Bombyx mori (Silk moth).